Reading from the N-terminus, the 504-residue chain is Deoxyguanosinetriphosphate triphosphohydrolase (504 aa).

Residues 66–273 (RLTHSLEVQQ…MEAADDISYC (208 aa)) form the HD domain.

This sequence belongs to the dGTPase family. Type 1 subfamily. Homotetramer. Mg(2+) is required as a cofactor.

The enzyme catalyses dGTP + H2O = 2'-deoxyguanosine + triphosphate + H(+). DGTPase preferentially hydrolyzes dGTP over the other canonical NTPs. This chain is Deoxyguanosinetriphosphate triphosphohydrolase, found in Klebsiella pneumoniae subsp. pneumoniae (strain ATCC 700721 / MGH 78578).